The sequence spans 184 residues: MRAFLKILMVLIFMSVAYAKNPSTLSKEEEVLQHLQSFSAHFKQVLKSEKPLVYYGVLKAKAPNWALWVYEKPLKKEIYMNDKEVVIYEPNLFQATITPLKDKTDFFTILKRLKKQDDGSFKTTINKTTYRLIFKDGKPFSLEFKDEMNNLVTITFSQAEINPTIADEIFVFKPKDENIDIVRQ.

Positions 1-19 are cleaved as a signal peptide; it reads MRAFLKILMVLIFMSVAYA.

The protein belongs to the LolA family. In terms of assembly, monomer.

It localises to the periplasm. Participates in the translocation of lipoproteins from the inner membrane to the outer membrane. Only forms a complex with a lipoprotein if the residue after the N-terminal Cys is not an aspartate (The Asp acts as a targeting signal to indicate that the lipoprotein should stay in the inner membrane). This chain is Outer-membrane lipoprotein carrier protein, found in Helicobacter pylori (strain HPAG1).